Reading from the N-terminus, the 143-residue chain is MAKKIVGFIKLQVPAGKANPSPPIGPALGQRGLNIMEFCKAFNAQTQGVEPGLPLPVVITAFADKSFTFIIKTPPATVLIKKAIKLDKGSSNPLKNKVGKITRAQLEEIANTKLKDMNAADVDAAVRTLAGSARSMGVIVEGV.

This sequence belongs to the universal ribosomal protein uL11 family. Part of the ribosomal stalk of the 50S ribosomal subunit. Interacts with L10 and the large rRNA to form the base of the stalk. L10 forms an elongated spine to which L12 dimers bind in a sequential fashion forming a multimeric L10(L12)X complex. In terms of processing, one or more lysine residues are methylated.

In terms of biological role, forms part of the ribosomal stalk which helps the ribosome interact with GTP-bound translation factors. This chain is Large ribosomal subunit protein uL11, found in Delftia acidovorans (strain DSM 14801 / SPH-1).